Reading from the N-terminus, the 432-residue chain is MLLSKYFLPVLKEDPSEAQITSHKLMLRSGMIRQQAAGIYSWLPLGLKVLKNIENIVRSNMDKAGCLEVLMPCIQPAHLWVESGRFDNYGKEMLKFQDRHDNTLLFGPTNEDMVTDIFRNNIKSYKDLPKNLYHIQWKFRDEIRPRFGVMRGREFLMKDAYSFDIDEESAVKTYNQMYKAYINTFRDLGVFAVPVIADNGPIGGKLSHEFHIIAETGESNIYYDKRFKTLKDNPDIDIEEIKSWYAAAEEKHDASKLSSDKEITSSKGIEVGHIFYIGTKYSVNMNALINDEHGKLTPIEMSSYGIGISRLVAAIIEANSDAKGIIWPIAVAPFKISLINLNIHDSKCLELAERVYNELLAQNIEVLYDDTDVRAGSKFATHDLIGSPYQIIIGPKKAANNIVELKNRKNGEIEDIDLNKRALNSYLTFFNS.

This sequence belongs to the class-II aminoacyl-tRNA synthetase family. ProS type 2 subfamily. Homodimer.

Its subcellular location is the cytoplasm. The catalysed reaction is tRNA(Pro) + L-proline + ATP = L-prolyl-tRNA(Pro) + AMP + diphosphate. In terms of biological role, catalyzes the attachment of proline to tRNA(Pro) in a two-step reaction: proline is first activated by ATP to form Pro-AMP and then transferred to the acceptor end of tRNA(Pro). The chain is Proline--tRNA ligase from Rickettsia bellii (strain OSU 85-389).